Consider the following 370-residue polypeptide: 3-isopropylmalate dehydrogenase (370 aa).

Residue 77 to 90 participates in NAD(+) binding; it reads GPKWDGVPYDARPE. 4 residues coordinate substrate: Arg97, Arg107, Arg135, and Asp226. Mg(2+) is bound by residues Asp226, Asp250, and Asp254. 290 to 302 provides a ligand contact to NAD(+); sequence GSAPDIAGKGMAN.

Belongs to the isocitrate and isopropylmalate dehydrogenases family. LeuB type 1 subfamily. As to quaternary structure, homodimer. Mg(2+) serves as cofactor. Requires Mn(2+) as cofactor.

The protein resides in the cytoplasm. The catalysed reaction is (2R,3S)-3-isopropylmalate + NAD(+) = 4-methyl-2-oxopentanoate + CO2 + NADH. The protein operates within amino-acid biosynthesis; L-leucine biosynthesis; L-leucine from 3-methyl-2-oxobutanoate: step 3/4. In terms of biological role, catalyzes the oxidation of 3-carboxy-2-hydroxy-4-methylpentanoate (3-isopropylmalate) to 3-carboxy-4-methyl-2-oxopentanoate. The product decarboxylates to 4-methyl-2 oxopentanoate. This chain is 3-isopropylmalate dehydrogenase, found in Rhodopseudomonas palustris (strain ATCC BAA-98 / CGA009).